The sequence spans 231 residues: Cuticlin 2 (231 aa).

An N-terminal signal peptide occupies residues 1-16 (MQKLIVFFTTIAAAQA). 12 tandem repeats follow at residues 75 to 78 (AAPI), 79 to 82 (AAPA), 90 to 93 (AAPV), 105 to 108 (AAPI), 114 to 117 (AAPA), 121 to 124 (AAPV), 137 to 140 (AAPA), 153 to 156 (AAPA), 169 to 172 (AAPA), 192 to 195 (AAPA), 208 to 211 (AAPA), and 218 to 221 (AAPA). The segment at 75–221 (AAPIAAPAGG…AGGYQAAAPA (147 aa)) is 12 X 4 AA repeats of A-A-P-[AVI].

In terms of processing, tyrosine residues can be cross-linked in vitro, leading to the formation of insoluble high molecular-weight complexes.

The protein resides in the secreted. In terms of biological role, component of the insoluble part of the cuticles. The chain is Cuticlin 2 from Caenorhabditis elegans.